Consider the following 114-residue polypeptide: Gamma-glutamylcyclotransferase family protein ytfP (114 aa).

This sequence belongs to the gamma-glutamylcyclotransferase family.

The protein resides in the cytoplasm. Functionally, may play a role in antibiotic biosynthesis. This chain is Gamma-glutamylcyclotransferase family protein ytfP (ytfP), found in Citrobacter rodentium (strain ICC168) (Citrobacter freundii biotype 4280).